A 115-amino-acid chain; its full sequence is Con-Ins T2 (115 aa).

An N-terminal signal peptide occupies residues 1 to 21; it reads MTTSFYFLLVALGLLLYVCQS. The propeptide occupies 22–29; the sequence is SFGNQHTR. Cystine bridges form between C38/C101, C50/C114, and C100/C105. E48 carries the post-translational modification 4-carboxyglutamate. Positions 53–94 are cleaved as a propeptide — c peptide; it reads KRNDAGKKRGQASPLWQRGGSLSMLKARAKRNEAFHLQRAHR. E98 carries the 4-carboxyglutamate modification. Residue E109 is modified to 4-carboxyglutamate. C114 bears the Cysteine amide mark.

The protein belongs to the insulin family. In terms of assembly, heterodimer of A and B chains; disulfide-linked. Expressed by the venom gland.

It localises to the secreted. Functionally, this venom insulin facilitates prey capture by rapidly inducing hypoglycemic shock. It is one of the smallest known insulin found in nature and lacks the C-terminal segment of the B chain that, in human insulin, mediates engagement of the insulin receptor (INSR) and assembly of the hormone's hexameric storage form. Despite lacking this segment, it both binds and activates human insulin receptor (long isoform (HIR-B)) with a high potency (EC(50)=15.5 nM). In vivo, intraperitoneal injection of this peptide into zebrafish lowers blood glucose with a lower potency than human insulin. In addition, when applied to water, this peptide reduces overall locomotor activity of zebrafish larvae, observed as a significant decrease in the percentage of time spent swimming and movement frequency. When tested on a mouse model of diabetes, this insulin also lowers blood glucose with a 10-fold lower potency than human insulin. The sequence is that of Con-Ins T2 from Conus tulipa (Fish-hunting cone snail).